A 1668-amino-acid chain; its full sequence is Kinesin-like protein KIF21B (1668 aa).

Residues Cys8 to Ile371 form the Kinesin motor domain. Gly87–Thr94 contacts ATP. Residues Lys372–Leu465 are a coiled coil. The segment at Met401 to His1100 is interaction with TRIM3. Disordered stretches follow at residues Lys553–Lys629 and Arg837–Ser866. A compositionally biased stretch (acidic residues) spans Asn579–Glu628. At Ser580 the chain carries Phosphoserine. Thr583 bears the Phosphothreonine mark. Low complexity predominate over residues Ser847–Ser866. Positions Ile924–Thr1019 form a coiled coil. Residues Ser1150, Ser1168, and Ser1217 each carry the phosphoserine modification. Polar residues predominate over residues Leu1199 to Leu1219. The segment at Leu1199–Asn1253 is disordered. Thr1239 bears the Phosphothreonine mark. Residue Ser1243 is modified to Phosphoserine. WD repeat units follow at residues Gly1308 to Ala1345, Gly1348 to Arg1386, Gln1412 to Lys1450, Gly1453 to Ile1495, Pro1504 to Gln1541, Ala1545 to Glu1584, and Gly1587 to Leu1624.

It belongs to the TRAFAC class myosin-kinesin ATPase superfamily. Kinesin family. In terms of assembly, interacts with TRIM3; the interaction positively affects motility of KIF21B. Interacts with GABARAP and GABA(A) receptor subunits: GABRG2, GABRA1 and GABRA2. May interact with GABA(A) receptor subunits: GABRB2 and GABRB3. In terms of tissue distribution, expressed in brain (at protein level). Expressed in spleen and at lower levels in testes.

The protein resides in the cytoplasm. The protein localises to the cytoskeleton. It is found in the cell projection. It localises to the dendrite. Its subcellular location is the growth cone. The protein resides in the axon. The protein localises to the cytoplasmic vesicle. Functionally, plus-end directed microtubule-dependent motor protein which displays processive activity. Is involved in regulation of microtubule dynamics, synapse function and neuronal morphology, including dendritic tree branching and spine formation. Plays a role in lerning and memory. Involved in delivery of gamma-aminobutyric acid (GABA(A)) receptor to cell surface. This chain is Kinesin-like protein KIF21B (Kif21b), found in Mus musculus (Mouse).